The chain runs to 860 residues: MSEQVGQREAVDSPQATGVKTPPEPCPLCRETGPPQPPSITEEGKTNEDIDFIWVACNKCDEWYHSACLFLGDEKWRGTIPKEIISTVETNFGDEGAWTNWVEWIGKWYCAPCLARSTSPSNPRPPRHPLVATMKRASIQPKDIDQAGKPLKRSASTSAPLLKSNIKRPRTSTKGQETASPEIDMKSEREQQAESTAGTPASDAPQGRPKRKTAQIDYRNLNNSIATPTHQWLELIADPEKYGRTILDANYPALPGKLLTRAWLESQPLPGQPSSISPDLLPTRFWGPDREPLIVRPENGGFSSLGGHLPSKDLTVQDVANLVGPDRMVDVIDVSSQHSSQWTLQKWAEYIQSSSGNTSVRNPKVYNVISLEISGTELAKKVKPPKIVREIDWVDNFWRFNAGAGGKDVKEKGRGNDSREGSEIRKEGSHLTEGDNGGEIEEDLEGLKEKTNTPYPKVQLYCLMGMKGAWTDWHVDFAASSVYYTIHSGAKVFFFVKPTEQNLKAYAEWSGSYEKQQDTWLGDMVDEVRKVELHAGDTMIIPTGYIHAVYTPMDSIVFGGNFLHSYNVDTQLRLRQIEIDTKVPQRFRFPMFDRLCWYVAEKYCSDLRHLRAYRPRATTTPKPPHFRVLQCLSYLANFLVSQTGILEDPEAEDKARKLVHDRIPGDIVKDPEGLAKELKWRVERELGALGLLGEEASGVEAEEFKSNGTANGSVKIKGKEVSRKRDRLSKVFDKKAISRTWDFHPPAWSENRQSPQIETTTVQLPRPSTSSSDAISGSGPGASPGASANGGANENEQAELTTMLVKQTRKRMRELDDGTVIEESQETTFVEKKTIWGPKLDKEKISQPQGKVEEDMDIDH.

Disordered regions lie at residues 1-45 (MSEQ…EEGK), 117-212 (STSP…PKRK), and 408-440 (DVKEKGRGNDSREGSEIRKEGSHLTEGDNGGEI). A PHD-type zinc finger spans residues 23-116 (PEPCPLCRET…KWYCAPCLAR (94 aa)). 2 stretches are compositionally biased toward basic and acidic residues: residues 183-192 (IDMKSEREQQ) and 408-433 (DVKEKGRGNDSREGSEIRKEGSHLTE). Residues 416 to 579 (NDSREGSEIR…TQLRLRQIEI (164 aa)) form the JmjC domain. Thr-471 contacts substrate. Fe cation contacts are provided by His-474 and Asp-476. Position 491 (Lys-491) interacts with substrate. His-547 contributes to the Fe cation binding site. Disordered regions lie at residues 744–795 (HPPA…ANEN) and 837–860 (GPKLDKEKISQPQGKVEEDMDIDH). Residues 750 to 763 (ENRQSPQIETTTVQ) are compositionally biased toward polar residues. The segment covering 767–795 (PSTSSSDAISGSGPGASPGASANGGANEN) has biased composition (low complexity).

It belongs to the JHDM1 histone demethylase family. It depends on Fe(2+) as a cofactor.

Its subcellular location is the nucleus. The catalysed reaction is N(6),N(6)-dimethyl-L-lysyl(36)-[histone H3] + 2 2-oxoglutarate + 2 O2 = L-lysyl(36)-[histone H3] + 2 formaldehyde + 2 succinate + 2 CO2. Functionally, histone demethylase that specifically demethylates 'Lys-36' of histone H3, thereby playing a central role in histone code. This Cryptococcus neoformans var. neoformans serotype D (strain JEC21 / ATCC MYA-565) (Filobasidiella neoformans) protein is JmjC domain-containing histone demethylation protein 1 (JHD1).